A 227-amino-acid chain; its full sequence is DNA repair protein RecO (227 aa).

It belongs to the RecO family.

Its function is as follows. Involved in DNA repair and RecF pathway recombination. The chain is DNA repair protein RecO from Pseudomonas entomophila (strain L48).